The following is a 425-amino-acid chain: MQTVIKNGTVYQNGRLIHADVLIEDQKIKAIGTDLTGDKVIDATGKLVSPGLVDVHVHYRDPGQTYKEDIETGSKAAAHGGFTTVGAMPNVTPVPDTPDLMKKMVQENKQKGIVHIFQYGPITKNETTDELPDYAALKKAGAFALSNDGHGVQTAQTMYLAMQEAKKNDLIVAAHAQDDSLFNHGIVNEGEKAKELNLPPVTELAETTQIARDLLLAEKTGVHYHICHVSTKTSVELVRIAKACGINVTCEAAPHHLLLTEDDIPKDNGYYKMNPPLRSKEDQVALLVGLLDGTIDLIATDHAPHAKQEKQGGMQNAAFGITGSETAFSTLYTKFVKEDKVFTLEQLLSWLSDQPAKVFGLKKAGVLEPGCPADVAIFDLEHETELKEKNYQSKGINTPFTGQKIYGATVMTMVDGEVVYQRGEK.

The Zn(2+) site is built by histidine 56 and histidine 58. Substrate is bound by residues 58-60 and asparagine 90; that span reads HYR. Residues aspartate 148, histidine 175, and histidine 228 each contribute to the Zn(2+) site. Asparagine 274 provides a ligand contact to substrate. Aspartate 301 lines the Zn(2+) pocket. Aspartate 301 is a catalytic residue. Residues histidine 305 and 319 to 320 each bind substrate; that span reads FG.

The protein belongs to the metallo-dependent hydrolases superfamily. DHOase family. Class I DHOase subfamily. It depends on Zn(2+) as a cofactor.

It catalyses the reaction (S)-dihydroorotate + H2O = N-carbamoyl-L-aspartate + H(+). It participates in pyrimidine metabolism; UMP biosynthesis via de novo pathway; (S)-dihydroorotate from bicarbonate: step 3/3. In terms of biological role, catalyzes the reversible cyclization of carbamoyl aspartate to dihydroorotate. In Lactobacillus delbrueckii subsp. bulgaricus (strain ATCC BAA-365 / Lb-18), this protein is Dihydroorotase.